Reading from the N-terminus, the 320-residue chain is tRNA pseudouridine synthase B (320 aa).

The active-site Nucleophile is aspartate 41. Disordered stretches follow at residues proline 116 to glycine 136 and aspartate 259 to alanine 284. A compositionally biased stretch (basic and acidic residues) spans glutamine 125–glycine 136. A compositionally biased stretch (polar residues) spans serine 270 to alanine 284.

Belongs to the pseudouridine synthase TruB family. Type 1 subfamily.

The catalysed reaction is uridine(55) in tRNA = pseudouridine(55) in tRNA. Functionally, responsible for synthesis of pseudouridine from uracil-55 in the psi GC loop of transfer RNAs. In Prochlorococcus marinus (strain MIT 9313), this protein is tRNA pseudouridine synthase B.